Here is a 441-residue protein sequence, read N- to C-terminus: Gluconate 2-dehydrogenase cytochrome c subunit (441 aa).

The signal sequence occupies residues Met1 to Ala19. Cytochrome c domains follow at residues Ala26–Val129, Pro173–Gly289, and Asp312–Trp403. Residues Cys40, Cys43, His44, Cys188, Cys191, His192, Cys325, Cys328, and His329 each coordinate heme c.

In terms of assembly, heterotrimer. The cofactor is FAD. In terms of processing, binds 3 heme c groupd covalently per subunit.

The protein localises to the cell membrane. The catalysed reaction is D-gluconate + A = 2-dehydro-D-gluconate + AH2. In terms of biological role, part of the heterotrimer that catalyzes the conversion of D-gluconate to 2-dehydro-D-gluconate. The protein is Gluconate 2-dehydrogenase cytochrome c subunit of Pantoea cypripedii (Pectobacterium cypripedii).